The sequence spans 202 residues: MDKFTLITAKAAPMMAANTDTDVIMPKQFLKGIDRKGLDRGVFFDLRFNLDGTPNEKFILNQADWQGSQFLVVGPNFGCGSSREHAVWGLKQLGIRALIGTSFAGIFNDNCLRNGVLTICVSDQEIEQIATTVSNPATNTISVDLEGQKVLTENGEIAFDVDPLKKEMLIKGLDAVGFTLSMKDDILAFEQSYFKANPWLKL.

Belongs to the LeuD family. LeuD type 1 subfamily. Heterodimer of LeuC and LeuD.

The enzyme catalyses (2R,3S)-3-isopropylmalate = (2S)-2-isopropylmalate. It functions in the pathway amino-acid biosynthesis; L-leucine biosynthesis; L-leucine from 3-methyl-2-oxobutanoate: step 2/4. Catalyzes the isomerization between 2-isopropylmalate and 3-isopropylmalate, via the formation of 2-isopropylmaleate. In Mannheimia succiniciproducens (strain KCTC 0769BP / MBEL55E), this protein is 3-isopropylmalate dehydratase small subunit 1.